The chain runs to 326 residues: MLSPIRTTFHNSVNIVQSSPCQTVSFAGKEYELKVIDEKTPILFQWFEPNPERYKKDEVPIVNTKQHPYLDNVTNAARIESDRMIGIFVDGDFSVNQKTAFSKLERDFENVMIIYREDVDFSMYDRKLSDIYHDIICEQRLRTEDKRDEYLLNLLEKELREISKAQDSLISMYAKKRNHAWFDFFRNLALLKAGEIFRCTYNTKNHGISFGEGGIYLDMDMILTGKLGTIYAPDGISMHVDRRNDSVNIENSAIIVNRSNHPALLEGLSFMHSKVDAHPYYDGLGKGVKKYFNFTPLHNYNHFCDFIEFNHPNIIMNTSQYTCSSW.

Residues 45 to 47 (QWF), Tyr69, and 216 to 219 (YLDM) each bind UDP-N-acetyl-alpha-D-glucosamine. Positions 218–220 (DMD) match the DXD motif motif. A Mn(2+)-binding site is contributed by Asp220. Catalysis depends on Glu250, which acts as the Proton acceptor. Asn317 and Ser319 together coordinate Mn(2+). UDP-N-acetyl-alpha-D-glucosamine is bound by residues Ser319 and 324–326 (SSW).

This sequence belongs to the glycosyltransferase NleB family. Requires Mn(2+) as cofactor.

Its subcellular location is the secreted. The protein resides in the host cell. It catalyses the reaction L-arginyl-[protein] + UDP-N-acetyl-alpha-D-glucosamine = N(omega)-(N-acetyl-beta-D-glucosaminyl)-L-arginyl-[protein] + UDP + H(+). Functionally, protein-arginine N-acetylglucosaminyltransferase effector that catalyzes the transfer of a single N-acetylglucosamine (GlcNAc) to a conserved arginine residue of host target proteins. In contrast to NleB1, not able to disrupt TNF signaling in infected cells. Shows a lower enzymatic activity than NleB1. The chain is Protein-arginine N-acetylglucosaminyltransferase NleB2 from Escherichia coli O145:H28 (strain RM12581).